A 1175-amino-acid polypeptide reads, in one-letter code: Tyrosine-protein phosphatase non-receptor type 21 (1175 aa).

Residues 23-308 form the FERM domain; the sequence is LVARIQLLNN…ARHKFYRLNQ (286 aa). Positions 395-421 are enriched in polar residues; it reads YSAHSTNSLNTPQPYLQPSPMSSNPSI. Positions 395–445 are disordered; the sequence is YSAHSTNSLNTPQPYLQPSPMSSNPSIPGSDVMRPDYIPSHRHSALIPPSY. A phosphoserine mark is found at serine 577, serine 589, serine 590, serine 637, serine 673, serine 710, serine 711, serine 798, serine 800, and serine 805. Positions 663-702 are disordered; sequence DVAPRTFSAGSQSSVFSDKVKQEGTEEQGSGGYSHKKSLS. A Tyrosine-protein phosphatase domain is found at 897 to 1168; it reads VFTEYERILK…TFVYRVLIQF (272 aa). Substrate contacts are provided by residues glutamate 1068, 1109–1115, and glutamine 1153; that span reads CSAGVGR. Cysteine 1109 (phosphocysteine intermediate) is an active-site residue.

It belongs to the protein-tyrosine phosphatase family. Non-receptor class subfamily. Particularly abundantly in adrenal glands.

It localises to the cytoplasm. Its subcellular location is the cytoskeleton. The catalysed reaction is O-phospho-L-tyrosyl-[protein] + H2O = L-tyrosyl-[protein] + phosphate. In Rattus norvegicus (Rat), this protein is Tyrosine-protein phosphatase non-receptor type 21 (Ptpn21).